A 277-amino-acid polypeptide reads, in one-letter code: Prohibitin-3, mitochondrial (277 aa).

An N-acetylglycine modification is found at Gly-2. The Mitochondrial matrix segment spans residues 2-6 (GSQQA). Residues 7 to 28 (AVSFLSNLAKAAFGLGTAATVL) form a helical; Signal-anchor for type II membrane protein membrane-spanning segment. Residues 29–277 (NTSLFTVDGG…GQSMLFALNR (249 aa)) lie on the Mitochondrial intermembrane side of the membrane.

This sequence belongs to the prohibitin family. As to quaternary structure, component of a prohibitin multimeric complex in mitochondrial membranes. Mostly expressed in proliferative tissues, including vasculature, shoot and root apical tissues. Expressed in roots, stems, leaves and flowers (at protein level).

The protein localises to the cell membrane. It localises to the mitochondrion inner membrane. It is found in the nucleus. Its subcellular location is the cytoplasm. Prohibitin probably acts as a holdase/unfoldase for the stabilization of newly synthesized mitochondrial proteins. Necessary for mitochondrial and cell metabolism and biogenesis. Required to regulate the ethylene-mediated signaling; involved in growth maintenance in the presence of ethylene. Functions in nitric oxide (NO)-mediated responses and in hydrogen peroxide-induced NO accumulation. The sequence is that of Prohibitin-3, mitochondrial (PHB3) from Arabidopsis thaliana (Mouse-ear cress).